Here is a 398-residue protein sequence, read N- to C-terminus: MKLKLLNMILSMMNKTNNNNNIIINNTLDSLMNKKLLLKNMLLDMNNKKMNNMKRMLNNNNMNPAGANPVVHRIGPAGNINNKLQHLNNMNNWNTQIYNYNKNMEIMNTMNDKLINKLLYKMMTLKLNNMNINKIIMSKTINQHSLNKLNIKFYYYNNDINNNNNNNNNNYYMNMMNKLMNIMNNNMNNNLCNILSYYYKKKVTIEPIKLSYIYLNSDIFSKYISLNDMDKYNNGILTNYQRMLNNIMPKLNDHNISMNYINNINNINNNKYNNMINLLNNNNNINNNNNYNNNNNNYIGNINNIYNNMTIDNIPMDILMYKYLVGWSIKFKGRLSNNNGRTSTTNLLNGTFNNKKYLWSNINNNYKLNYIPSNHNLYNNSNINKNGKYNIKVKLNFI.

Belongs to the universal ribosomal protein uS3 family. As to quaternary structure, component of the mitochondrial small ribosomal subunit (mt-SSU). Mature yeast 74S mitochondrial ribosomes consist of a small (37S) and a large (54S) subunit. The 37S small subunit contains a 15S ribosomal RNA (15S mt-rRNA) and 34 different proteins. The 54S large subunit contains a 21S rRNA (21S mt-rRNA) and 46 different proteins. uS3m, uS4m and uS5m form the narrow entry site of the mRNA channel.

The protein resides in the mitochondrion. Its function is as follows. Component of the mitochondrial ribosome (mitoribosome), a dedicated translation machinery responsible for the synthesis of mitochondrial genome-encoded proteins, including at least some of the essential transmembrane subunits of the mitochondrial respiratory chain. The mitoribosomes are attached to the mitochondrial inner membrane and translation products are cotranslationally integrated into the membrane. uS3m is essential for mitochondrial protein synthesis and required for the maturation of small ribosomal subunits. In Saccharomyces cerevisiae (strain ATCC 204508 / S288c) (Baker's yeast), this protein is Small ribosomal subunit protein uS3m (VAR1).